The following is a 346-amino-acid chain: MAKAYKQAGVDIEAGYQAVALMKEHVQKTMRPEVLGGIGGFGGLFDLSALGYRQPVLISGTDGVGTKLKLAFLLDRHDTIGIDCVAMCVNDIIVQGAEPLFFLDYIACGKAVPEKIAAIVKGVADGCVEAGCALIGGETAEMPGMYDEDEYDLAGFAVGVAEKERLITGETIQAGDALVGLPSSGLHSNGYSLVRRIVFEQAKLSLDEIYEPLDVPLGEELLKPTRIYAKLLRSVRERFTIKGMAHITGGGLIENIPRMLPPGIGARIQLGSWPILPIFDFLREKGSLEEEEMFSVFNMGIGLVLAVSPETAAPLVEWLSERGEPAYIIGEVAKGAGVSFAGGGRA.

Belongs to the AIR synthase family.

Its subcellular location is the cytoplasm. The enzyme catalyses 2-formamido-N(1)-(5-O-phospho-beta-D-ribosyl)acetamidine + ATP = 5-amino-1-(5-phospho-beta-D-ribosyl)imidazole + ADP + phosphate + H(+). It functions in the pathway purine metabolism; IMP biosynthesis via de novo pathway; 5-amino-1-(5-phospho-D-ribosyl)imidazole from N(2)-formyl-N(1)-(5-phospho-D-ribosyl)glycinamide: step 2/2. The sequence is that of Phosphoribosylformylglycinamidine cyclo-ligase from Geobacillus kaustophilus (strain HTA426).